A 393-amino-acid polypeptide reads, in one-letter code: Cytochrome b (393 aa).

The next 4 helical transmembrane spans lie at 38-58 (FGSLAGICLVIQIVTGVFLAM), 82-104 (WLLRYMHANGASMFFIVVYLHIF), 119-139 (VWCLGVVIFLLMIVTAFIGYV), and 185-205 (FFSLHYLLPFILVGASLLHLA). Residues His-88 and His-102 each contribute to the heme b site. The heme b site is built by His-189 and His-203. A ubiquinone is bound at residue His-208. 4 helical membrane passes run 231–251 (FYVKDLVGWVAFAIFFSIWIF), 295–315 (VGGVAAIALVFICLLALPFFK), 327–347 (IYQGIFWLLLADCLLLGWIGC), and 354–373 (FVTIGQISSLVFFLFFAITP).

This sequence belongs to the cytochrome b family. As to quaternary structure, the main subunits of complex b-c1 are: cytochrome b, cytochrome c1 and the Rieske protein. Heme b is required as a cofactor. Post-translationally, first mitochondrial-encoded protein to be shown to have its N-terminal methionine cleaved off.

The protein resides in the mitochondrion inner membrane. Component of the ubiquinol-cytochrome c reductase complex (complex III or cytochrome b-c1 complex) that is part of the mitochondrial respiratory chain. The b-c1 complex mediates electron transfer from ubiquinol to cytochrome c. Contributes to the generation of a proton gradient across the mitochondrial membrane that is then used for ATP synthesis. In Solanum tuberosum (Potato), this protein is Cytochrome b (MT-CYB).